We begin with the raw amino-acid sequence, 314 residues long: tRNA pseudouridine synthase B (314 aa).

The active-site Nucleophile is the aspartate 41.

The protein belongs to the pseudouridine synthase TruB family. Type 1 subfamily.

The catalysed reaction is uridine(55) in tRNA = pseudouridine(55) in tRNA. Its function is as follows. Responsible for synthesis of pseudouridine from uracil-55 in the psi GC loop of transfer RNAs. This Prochlorococcus marinus (strain NATL2A) protein is tRNA pseudouridine synthase B.